Here is a 114-residue protein sequence, read N- to C-terminus: Pro-FMRFamide-related neuropeptide FF (114 aa).

The N-terminal stretch at 1-21 is a signal peptide; the sequence is MDSKWAALLLLLLLLLNWGHT. Positions 22–69 are excised as a propeptide; the sequence is EEAGSWGEDQVFAGEDKGPHPPQYAHIPDRIQTPGSLFRVLLQAMDTP. F82 is modified (phenylalanine amide). The propeptide occupies 85–100; it reads SAWGSWSKEQLNPQAR. Residue F111 is modified to Phenylalanine amide.

This sequence belongs to the FARP (FMRFamide related peptide) family.

It is found in the secreted. In terms of biological role, morphine modulating peptides. Have wide-ranging physiologic effects, including the modulation of morphine-induced analgesia, elevation of arterial blood pressure, and increased somatostatin secretion from the pancreas. Neuropeptide FF potentiates and sensitizes ASIC1 and ASIC3 channels. The chain is Pro-FMRFamide-related neuropeptide FF (Npff) from Mus musculus (Mouse).